The primary structure comprises 149 residues: MHCPFCSAVDTKVIDSRLVGEGTQVRRRRQCVICNERFTTFEVAELVLPRVIKSNDVREPFNEEKLRSGFLKALEKRPVKSDDVEMAINHIKSQLRATGEREVPSKMIGNLVMDALKKLDKVAYIRFASVYRSFEDIREFGEEIARLQD.

A zinc finger lies at 3–34 (CPFCSAVDTKVIDSRLVGEGTQVRRRRQCVIC). Positions 49 to 139 (PRVIKSNDVR…VYRSFEDIRE (91 aa)) constitute an ATP-cone domain.

This sequence belongs to the NrdR family. Zn(2+) serves as cofactor.

Functionally, negatively regulates transcription of bacterial ribonucleotide reductase nrd genes and operons by binding to NrdR-boxes. The protein is Transcriptional repressor NrdR of Sodalis glossinidius (strain morsitans).